The primary structure comprises 311 residues: tRNA-cytidine(32) 2-sulfurtransferase (311 aa).

The PP-loop motif signature appears at S47–S52. Residues C122, C125, and C213 each coordinate [4Fe-4S] cluster.

This sequence belongs to the TtcA family. In terms of assembly, homodimer. The cofactor is Mg(2+). It depends on [4Fe-4S] cluster as a cofactor.

The protein localises to the cytoplasm. It catalyses the reaction cytidine(32) in tRNA + S-sulfanyl-L-cysteinyl-[cysteine desulfurase] + AH2 + ATP = 2-thiocytidine(32) in tRNA + L-cysteinyl-[cysteine desulfurase] + A + AMP + diphosphate + H(+). It functions in the pathway tRNA modification. Functionally, catalyzes the ATP-dependent 2-thiolation of cytidine in position 32 of tRNA, to form 2-thiocytidine (s(2)C32). The sulfur atoms are provided by the cysteine/cysteine desulfurase (IscS) system. The polypeptide is tRNA-cytidine(32) 2-sulfurtransferase (Shigella dysenteriae serotype 1 (strain Sd197)).